Consider the following 520-residue polypeptide: MKIELAIIFIVLAAGAGFLIGNLLRKKLSDSLVSKAEELASRIVEDAKREAETISKEAALQAKDVVYQAKADFEREAKEKHKDLQTLEKRLQQKEENLDKKMNLFDQRDADLTKKEQGILAREQSLNRKEESLDALVAEQRAKLEQISGMSSAEAKKILMDAMESEAKLDAAKRIKAIEEEARETADKKSKEIISLAVQRYAGEYVAEKTVSVVALPSDEMKGRIIGREGRNIRALEAATGIDLIIDDTPEAVILSGFNPVRREVAKIALEKLITDGRIHPGRIEEVVAKAEEEVEQAVKEAGDQAAFDLGVHGIHPEILKLIGRLKYRTSYSQNVYQHSLEVAFLCGIMASELGINVKQAKRAGLLHDLGKAVDHEVEGSHAVIGAELARKYGESPKIVHAIMAHHEDEKPNSILAVLVQAADALSGARPGARREMMETYVKRLEDLERISCSFGGVNNSFAIQAGREIRVMVSSEEVSDERAVLLAKDIAKKIEAEMTYPGQIKVNVIRETRAIEYAR.

A helical membrane pass occupies residues 3 to 23; it reads IELAIIFIVLAAGAGFLIGNL. The KH domain occupies 210-273; sequence TVSVVALPSD…EVAKIALEKL (64 aa). An HD domain is found at 336 to 429; it reads VYQHSLEVAF…VQAADALSGA (94 aa).

Belongs to the RNase Y family.

Its subcellular location is the cell membrane. Functionally, endoribonuclease that initiates mRNA decay. This is Ribonuclease Y from Geobacter sulfurreducens (strain ATCC 51573 / DSM 12127 / PCA).